The sequence spans 297 residues: Mycothiol acetyltransferase (297 aa).

N-acetyltransferase domains lie at 8 to 153 and 156 to 297; these read DALD…PPLP and VALR…QYAL. Glutamate 36 contributes to the 1D-myo-inositol 2-(L-cysteinylamino)-2-deoxy-alpha-D-glucopyranoside binding site. Residue 80–82 coordinates acetyl-CoA; sequence LAV. Glutamate 183, lysine 223, and glutamate 231 together coordinate 1D-myo-inositol 2-(L-cysteinylamino)-2-deoxy-alpha-D-glucopyranoside. Acetyl-CoA-binding positions include 235 to 237 and 242 to 248; these read VGV and QGGGLGK. Tyrosine 269 is a binding site for 1D-myo-inositol 2-(L-cysteinylamino)-2-deoxy-alpha-D-glucopyranoside. Position 274-279 (274-279) interacts with acetyl-CoA; that stretch reads NSPAVR.

The protein belongs to the acetyltransferase family. MshD subfamily. Monomer.

It catalyses the reaction 1D-myo-inositol 2-(L-cysteinylamino)-2-deoxy-alpha-D-glucopyranoside + acetyl-CoA = mycothiol + CoA + H(+). In terms of biological role, catalyzes the transfer of acetyl from acetyl-CoA to desacetylmycothiol (Cys-GlcN-Ins) to form mycothiol. This Actinosynnema mirum (strain ATCC 29888 / DSM 43827 / JCM 3225 / NBRC 14064 / NCIMB 13271 / NRRL B-12336 / IMRU 3971 / 101) protein is Mycothiol acetyltransferase.